Here is a 792-residue protein sequence, read N- to C-terminus: Homeobox protein HAZ1 (792 aa).

Positions 1–154 are disordered; the sequence is MDKTTTSDLV…RPPKGGTPKD (154 aa). The span at 15–36 shows a compositional bias: polar residues; that stretch reads NIGSNAGSAQEPLTTNGKTSGV. Basic residues predominate over residues 38-49; that stretch reads NRYKQTVKRGRK. Polar residues predominate over residues 51-67; that stretch reads SQISPSKTYPLRSSHSN. Over residues 95–104 the composition is skewed to basic residues; sequence VAKKRKRSKP. Residues 116-127 are compositionally biased toward basic and acidic residues; it reads TSEKKNKAHNEL. The PHD-type zinc finger occupies 244 to 301; it reads DIFCAACGSKDVTLKNDIILCDGICDRGFHQYCLNPPLLAEDIPQGDEGWLCPACDCK. Disordered stretches follow at residues 338–495 and 529–599; these read QIDA…NSNL and YGKA…SDQQ. The segment covering 345–354 has biased composition (acidic residues); sequence PSDDSADNDY. Residues 362–371 show a composition bias toward basic and acidic residues; the sequence is HKVDEEKSSG. Acidic residues-rich tracts occupy residues 373–389 and 433–453; these read DGGE…EDSE and DESN…DDFC. The homeobox DNA-binding region spans 610–669; sequence STAKNRHFGPAINQKLKAHFKEDPYPSRATKENLAQELGLTFNQVTKWFSSTRHYARVAA. Disordered regions lie at residues 677–697 and 711–792; these read ENHT…QLRG and SEER…KTGR. Polar residues-rich tracts occupy residues 716–737 and 746–760; these read GQSN…QSVA and NQGN…TPNA. Positions 774 to 792 are enriched in basic and acidic residues; the sequence is DEARRKAVQRELRKMKTGR.

Belongs to the PHD-associated homeobox family. As to expression, expressed in roots, leaves, stems, panicle and seeds.

Its subcellular location is the nucleus. Functionally, transcriptional repressor involved in the regulation of gibberrelin (GA) signaling. Binds to the 5'-GATC-3' motif of HD16/EL1 promoter. Functions as a positive regulator of GA signaling by suppressing the expression of HD16/EL1, a negative regulator of GA signaling. This Oryza sativa subsp. japonica (Rice) protein is Homeobox protein HAZ1.